A 356-amino-acid chain; its full sequence is MKKLINDVQDVLDEQLAGLAKAHPSLTLHQDPVYVTRADAPVAGKVALLSGGGSGHEPMHCGYIGQGMLSGACPGEIFTSPTPDKIFECAMQVDGGEGVLLIIKNYTGDILNFETATELLHDSGVKVTTVVIDDDVAVKDSLYTAGRRGVANTVLIEKLVGAAAERGDSLDACAELGRKLNNQGHSIGIALGACTVPAAGKPSFTLADNEMEFGVGIHGEPGIDRRPFSSLDQTVDEMFDTLLVNGSYHRTLRFWDYQQGSWQEEQQTKQPLQSGDRVIALVNNLGATPLSELYGVYNRLTTRCQQAGLTIERNLIGAYCTSLDMTGFSITLLKVDDETLALWDAPVHTPALNWGK.

Residues 7–352 (DVQDVLDEQL…WDAPVHTPAL (346 aa)) form the DhaK domain. Dihydroxyacetone-binding positions include 53–56 (GSGH), K104, and D109. H56 serves as the catalytic Proton acceptor. H218 (tele-hemiaminal-histidine intermediate) is an active-site residue.

Homodimer. The dihydroxyacetone kinase complex is composed of a homodimer of DhaM, a homodimer of DhaK and the subunit DhaL. DhaL also forms a complex with DhaR.

The catalysed reaction is dihydroxyacetone + phosphoenolpyruvate = dihydroxyacetone phosphate + pyruvate. Its pathway is polyol metabolism; glycerol degradation. Inhibited by chloro-3-hydroxyacetone and D,L-glyceraldehyde. In terms of biological role, dihydroxyacetone binding subunit of the dihydroxyacetone kinase, which is responsible for the phosphoenolpyruvate (PEP)-dependent phosphorylation of dihydroxyacetone via a phosphoryl group transfer from DhaL-ATP. Binds covalently dihydroxyacetone in hemiaminal linkage. DhaK also acts as corepressor of the transcription activator DhaR by binding to the sensor domain of DhaR. In the presence of dihydroxyacetone, DhaL-ADP displaces DhaK and stimulates DhaR activity. In the absence of dihydroxyacetone, DhaL-ADP is converted by the PTS to DhaL-ATP, which does not bind to DhaR. The polypeptide is PEP-dependent dihydroxyacetone kinase, dihydroxyacetone-binding subunit DhaK (Escherichia coli (strain K12)).